A 168-amino-acid chain; its full sequence is Thermonuclease (168 aa).

A signal peptide spans 1 to 27 (MKKITTGVLILAIAIVVLIFQYINGDG). Catalysis depends on residues R64, E72, and R114.

This sequence belongs to the thermonuclease family. Ca(2+) serves as cofactor.

It localises to the secreted. It catalyses the reaction Endonucleolytic cleavage to nucleoside 3'-phosphates and 3'-phosphooligonucleotide end-products.. Functionally, enzyme that catalyzes the hydrolysis of both DNA and RNA at the 5'-position of the phosphodiester bond. In Staphylococcus intermedius, this protein is Thermonuclease (nucI).